The chain runs to 790 residues: Phenylalanine--tRNA ligase beta subunit (790 aa).

The region spanning P39–C154 is the tRNA-binding domain. The region spanning F404 to P483 is the B5 domain. Positions 457, 463, 466, and 467 each coordinate Mg(2+). Residues P694–S790 enclose the FDX-ACB domain.

The protein belongs to the phenylalanyl-tRNA synthetase beta subunit family. Type 1 subfamily. In terms of assembly, tetramer of two alpha and two beta subunits. Requires Mg(2+) as cofactor.

Its subcellular location is the cytoplasm. The catalysed reaction is tRNA(Phe) + L-phenylalanine + ATP = L-phenylalanyl-tRNA(Phe) + AMP + diphosphate + H(+). The chain is Phenylalanine--tRNA ligase beta subunit from Chlamydia trachomatis serovar A (strain ATCC VR-571B / DSM 19440 / HAR-13).